The primary structure comprises 461 residues: Carboxypeptidase Rv3627c (461 aa).

The signal sequence occupies residues 1 to 28 (MGPTRWRKSTHVVVGAAVLAFVAVVVAA). S114 acts as the Acyl-ester intermediate in catalysis. The active-site Proton acceptor is the K117. S295 is an active-site residue.

Belongs to the peptidase S13 family.

Carboxypeptidase that cleaves terminal D-alanine from peptidoglycan in the mycobacterial cell wall. May cleave L-Lys-D-Ala and/or D-Ala-D-Ala peptide bonds. Exerts important effects on mycobacterial cell morphology and cell division. This Mycobacterium tuberculosis (strain ATCC 25618 / H37Rv) protein is Carboxypeptidase Rv3627c.